Here is a 117-residue protein sequence, read N- to C-terminus: MQTITLLALLACIAVPIFADFDHLRARRDVVEASGEGSGESSGEKIVESSGEGSGESSGDKIVEASGEGSGEGSGASDAVLESSGEGSGENLSNGIVASDAPKDVKALTASEFAVSV.

Residues 1–19 (MQTITLLALLACIAVPIFA) form the signal peptide. The segment at 31 to 97 (VEASGEGSGE…SGENLSNGIV (67 aa)) is disordered. Composition is skewed to low complexity over residues 32-41 (EASGEGSGES) and 48-57 (ESSGEGSGES). Residues Ser66, Ser70, Ser74, Ser84, and Ser88 are each glycosylated (O-linked (Xyl...) (chondroitin sulfate) serine). Low complexity predominate over residues 75 to 95 (GASDAVLESSGEGSGENLSNG). Asn91 carries an N-linked (GlcNAc...) asparagine glycan.

This is Chondroitin proteoglycan 7 (cpg-7) from Caenorhabditis briggsae.